The chain runs to 284 residues: NADH-cytochrome b5 reductase 1 (284 aa).

A helical membrane pass occupies residues 7–27; it reads KLVVVIVIVVVPLLFKFIIGP. Residues 38–142 form the FAD-binding FR-type domain; sequence NDFQSFPLVE…KGPRGNYHYE (105 aa). Position 148–180 (148–180) interacts with FAD; that stretch reads HLGMIAGGTGIAPMYQIMKAIAMDSHDTTKVSL.

This sequence belongs to the flavoprotein pyridine nucleotide cytochrome reductase family. In terms of assembly, monomer. Component of the 2-(3-amino-3-carboxypropyl)histidine synthase complex composed of DPH1, DPH2, KTI11/DPH3 and a NADH-dependent reductase, predominantly CBR1. Interacts with KTI11/DPH3. Interacts with STE20. The cofactor is FAD.

It localises to the mitochondrion outer membrane. The catalysed reaction is 2 Fe(III)-[cytochrome b5] + NADH = 2 Fe(II)-[cytochrome b5] + NAD(+) + H(+). It catalyses the reaction 2 Fe(3+)-[Dph3] + NADH = 2 Fe(2+)-[Dph3] + NAD(+) + H(+). The protein operates within protein modification; peptidyl-diphthamide biosynthesis. With respect to regulation, competitively inhibited by NAD(+). Inhibited by mercurials such as p-chloromercuribenzoate (PCMB) and HgCl(2). Enzymatic activity increases under anaerobic conditions. In terms of biological role, NADH-dependent reductase for KTI11/DPH3 and cytochrome b5. Required for the first step of diphthamide biosynthesis, a post-translational modification of histidine which occurs in elongation factor 2. DPH1 and DPH2 transfer a 3-amino-3-carboxypropyl (ACP) group from S-adenosyl-L-methionine (SAM) to a histidine residue, the reaction is assisted by a reduction system comprising KTI11/DPH3 and a NADH-dependent reductase, predominantly CBR1. By reducing KTI11/DPH3, also involved in the formation of the tRNA wobble base modification mcm5s 2U (5-methoxycarbonylmethyl-2-thiouridine), mediated by the elongator complex. The cytochrome b5/NADH cytochrome b5 reductase electron transfer system supports the catalytic activity of several sterol biosynthetic enzymes. Plays a role in bud morphology. This is NADH-cytochrome b5 reductase 1 (CBR1) from Saccharomyces cerevisiae (strain YJM789) (Baker's yeast).